We begin with the raw amino-acid sequence, 177 residues long: Nucleoside triphosphate/diphosphate phosphatase (177 aa).

The Proton donor role is filled by R23. 6 residues coordinate Mg(2+): N87, D103, D105, D107, D120, and E123.

It belongs to the Ntdp family. Mg(2+) is required as a cofactor.

It catalyses the reaction a ribonucleoside 5'-triphosphate + H2O = a ribonucleoside 5'-diphosphate + phosphate + H(+). The enzyme catalyses a ribonucleoside 5'-diphosphate + H2O = a ribonucleoside 5'-phosphate + phosphate + H(+). Has nucleoside phosphatase activity towards nucleoside triphosphates and nucleoside diphosphates. The polypeptide is Nucleoside triphosphate/diphosphate phosphatase (Streptococcus equi subsp. zooepidemicus (strain MGCS10565)).